A 155-amino-acid polypeptide reads, in one-letter code: 6,7-dimethyl-8-ribityllumazine synthase (155 aa).

Residues F24, 58 to 60 (AFE), and 82 to 84 (VII) contribute to the 5-amino-6-(D-ribitylamino)uracil site. Position 87-88 (87-88 (ST)) interacts with (2S)-2-hydroxy-3-oxobutyl phosphate. H90 functions as the Proton donor in the catalytic mechanism. F115 lines the 5-amino-6-(D-ribitylamino)uracil pocket. Position 129 (R129) interacts with (2S)-2-hydroxy-3-oxobutyl phosphate.

It belongs to the DMRL synthase family.

The enzyme catalyses (2S)-2-hydroxy-3-oxobutyl phosphate + 5-amino-6-(D-ribitylamino)uracil = 6,7-dimethyl-8-(1-D-ribityl)lumazine + phosphate + 2 H2O + H(+). It functions in the pathway cofactor biosynthesis; riboflavin biosynthesis; riboflavin from 2-hydroxy-3-oxobutyl phosphate and 5-amino-6-(D-ribitylamino)uracil: step 1/2. In terms of biological role, catalyzes the formation of 6,7-dimethyl-8-ribityllumazine by condensation of 5-amino-6-(D-ribitylamino)uracil with 3,4-dihydroxy-2-butanone 4-phosphate. This is the penultimate step in the biosynthesis of riboflavin. This chain is 6,7-dimethyl-8-ribityllumazine synthase, found in Chlorobium phaeobacteroides (strain DSM 266 / SMG 266 / 2430).